The following is a 112-amino-acid chain: uncharacterized protein (112 aa).

This is an uncharacterized protein from Caenorhabditis elegans.